Reading from the N-terminus, the 160-residue chain is Serine-protein kinase RsbW (160 aa).

It belongs to the anti-sigma-factor family.

It catalyses the reaction L-seryl-[protein] + ATP = O-phospho-L-seryl-[protein] + ADP + H(+). It carries out the reaction L-threonyl-[protein] + ATP = O-phospho-L-threonyl-[protein] + ADP + H(+). Its function is as follows. Negative regulator of sigma-B activity. Phosphorylates and inactivates its specific antagonist protein, RsbV. Upon phosphorylation of RsbV, RsbW is released and binds to sigma-B, thereby blocking its ability to form an RNA polymerase holoenzyme (E-sigma-B). This chain is Serine-protein kinase RsbW, found in Bacillus cereus (strain ZK / E33L).